The chain runs to 100 residues: Small ribosomal subunit protein uS14 (100 aa).

The protein belongs to the universal ribosomal protein uS14 family. Part of the 30S ribosomal subunit. Contacts proteins S3 and S10.

Binds 16S rRNA, required for the assembly of 30S particles and may also be responsible for determining the conformation of the 16S rRNA at the A site. This is Small ribosomal subunit protein uS14 from Synechococcus sp. (strain CC9902).